Consider the following 242-residue polypeptide: Protein FsrB (242 aa).

5 helical membrane-spanning segments follow: residues 29–49, 52–72, 78–95, 100–120, and 160–180; these read LTVY…SVLF, LSET…AGGW, WLCR…PFVL, VSLP…LFYW, and KIAS…LPVT.

It belongs to the AgrB family.

The protein resides in the cell membrane. May be involved in the proteolytic processing of a quorum sensing system signal molecule precursor required for the regulation of the virulence genes for gelatinase (gelE) and a serine protease (sprE). This Enterococcus faecalis (strain ATCC 47077 / OG1RF) protein is Protein FsrB (fsrB).